We begin with the raw amino-acid sequence, 396 residues long: Purine ribonucleoside efflux pump NepI (396 aa).

Residues 1–21 (MSEFIAENRGADAITRPNWSA) lie on the Cytoplasmic side of the membrane. A helical transmembrane segment spans residues 22 to 42 (VFSVAFCVACLIIVEFLPVSL). Over 43–54 (LTPMAQDLGISE) the chain is Periplasmic. Residues 55–75 (GVAGQSVTVTAFVAMFASLFI) form a helical membrane-spanning segment. Over 76-85 (TQTIQATDRR) the chain is Cytoplasmic. Residues 86–106 (YVVILFAVLLTLSCLLVSFAN) traverse the membrane as a helical segment. Position 107 (serine 107) is a topological domain, periplasmic. Residues 108-128 (FSLLLIGRACLGLALGGFWAM) traverse the membrane as a helical segment. The Cytoplasmic segment spans residues 129-147 (SASLTMRLVPPRTVPKALS). A helical transmembrane segment spans residues 148-168 (VIFGAVSIALVIAAPLGSFLG). The Periplasmic portion of the chain corresponds to 169 to 175 (ELIGWRN). The chain crosses the membrane as a helical span at residues 176–196 (VFNAAAVMGVLCIFWIIKSLP). Topologically, residues 197–215 (SLPGEPSHQKQNTFRLLQR) are cytoplasmic. The helical transmembrane segment at 216 to 236 (PGVMAGMIAIFMSFAGQFAFF) threads the bilayer. The Periplasmic segment spans residues 237–255 (TYIRPVYMNLAGFGVDGLT). A helical transmembrane segment spans residues 256–276 (LVLLSFGIASFIGTSLSSFIL). Topologically, residues 277–281 (KRSVK) are cytoplasmic. The helical transmembrane segment at 282 to 302 (LALAGAPLILAVSALVLTLWG) threads the bilayer. Topologically, residues 303-305 (SDK) are periplasmic. Residues 306–326 (IVATGVAIIWGLTFALVPVGW) form a helical membrane-spanning segment. The Cytoplasmic portion of the chain corresponds to 327-343 (STWITRSLADQAEKAGS). Residues 344 to 364 (IQVAVIQLANTCGAAIGGYAL) traverse the membrane as a helical segment. At 365–366 (DN) the chain is on the periplasmic side. The helical transmembrane segment at 367 to 387 (IGLTSPLMLSGTLMLLTALLV) threads the bilayer. Residues 388-396 (TAKVKMKKS) lie on the Cytoplasmic side of the membrane.

It belongs to the major facilitator superfamily. DHA1 family. NepI (TC 2.A.1.2.26) subfamily.

The protein resides in the cell inner membrane. The catalysed reaction is inosine(in) + H(+)(out) = inosine(out) + H(+)(in). It catalyses the reaction guanosine(in) + H(+)(out) = guanosine(out) + H(+)(in). Functionally, involved in the efflux of purine ribonucleosides, such as inosine and guanosine. The chain is Purine ribonucleoside efflux pump NepI from Shigella flexneri.